Reading from the N-terminus, the 191-residue chain is dTTP/UTP pyrophosphatase (191 aa).

Catalysis depends on D65, which acts as the Proton acceptor.

It belongs to the Maf family. YhdE subfamily. A divalent metal cation serves as cofactor.

Its subcellular location is the cytoplasm. The enzyme catalyses dTTP + H2O = dTMP + diphosphate + H(+). It carries out the reaction UTP + H2O = UMP + diphosphate + H(+). Its function is as follows. Nucleoside triphosphate pyrophosphatase that hydrolyzes dTTP and UTP. May have a dual role in cell division arrest and in preventing the incorporation of modified nucleotides into cellular nucleic acids. The polypeptide is dTTP/UTP pyrophosphatase (Leptospira biflexa serovar Patoc (strain Patoc 1 / Ames)).